We begin with the raw amino-acid sequence, 317 residues long: Beta-ketoacyl-[acyl-carrier-protein] synthase III (317 aa).

Residues C112 and H244 contribute to the active site. Residues 245–249 are ACP-binding; it reads QANIR. N274 is a catalytic residue.

It belongs to the thiolase-like superfamily. FabH family. Homodimer.

It localises to the cytoplasm. The catalysed reaction is malonyl-[ACP] + acetyl-CoA + H(+) = 3-oxobutanoyl-[ACP] + CO2 + CoA. Its pathway is lipid metabolism; fatty acid biosynthesis. Functionally, catalyzes the condensation reaction of fatty acid synthesis by the addition to an acyl acceptor of two carbons from malonyl-ACP. Catalyzes the first condensation reaction which initiates fatty acid synthesis and may therefore play a role in governing the total rate of fatty acid production. Possesses both acetoacetyl-ACP synthase and acetyl transacylase activities. Its substrate specificity determines the biosynthesis of branched-chain and/or straight-chain of fatty acids. This chain is Beta-ketoacyl-[acyl-carrier-protein] synthase III, found in Rickettsia prowazekii (strain Madrid E).